The following is a 514-amino-acid chain: MVPSQEEPAAAERETNEAQPPGPAPSDDAPLPVPGPSDVSDGSVEKVEVELTRSTGNQEPPEPPEGGWGWLVMLAAMWCNGSVFGIQNAYGVLFVSMLETFGAKDDDNMAFKAAWVGSLSMGMIFFCCPIVSVFTDMFGCRRTAVLGAAVGFVGLMSSSFVSSIEPLYFTYGVVFACGCSFAYQPSLVILGHYFKKRLGLVNGIVTAGSSVFTILLPLLLGNLTSTVGLCYTLRILCIFMFVLFLAGFTYRPLVPSSKEKESEDSRSSFFSRRKLSPPKKIFNFALFKETAYAVWAAGIPLALFGYFVPYVHLMNHVKERFKDVNNKEVLFMCIGVTSGVGRLLFGRIADYLPGVKKVYLQVLSFFFIGLTSMMIPLCSVFGALIALCLIMGLFDGCFISIMAPIAFELVGPQDASQAIGFLLGFMSIPMTVGPPVAGLLHDKLGSYDLAFYLAGIPPFIGGAVLCLIPWIHSKKQREISKNTGGEKMEKMLANQSSLLSSSSGIFKKESDSII.

A disordered region spans residues 1–64; the sequence is MVPSQEEPAA…TGNQEPPEPP (64 aa). Over 1–65 the chain is Cytoplasmic; the sequence is MVPSQEEPAA…GNQEPPEPPE (65 aa). The chain crosses the membrane as a helical span at residues 66-86; the sequence is GGWGWLVMLAAMWCNGSVFGI. Over 87-113 the chain is Extracellular; sequence QNAYGVLFVSMLETFGAKDDDNMAFKA. The chain crosses the membrane as a helical span at residues 114–134; it reads AWVGSLSMGMIFFCCPIVSVF. The Cytoplasmic segment spans residues 135-143; it reads TDMFGCRRT. A helical membrane pass occupies residues 144-164; it reads AVLGAAVGFVGLMSSSFVSSI. Topologically, residues 165–170 are extracellular; sequence EPLYFT. A helical membrane pass occupies residues 171–191; that stretch reads YGVVFACGCSFAYQPSLVILG. Residues 192–199 lie on the Cytoplasmic side of the membrane; sequence HYFKKRLG. The helical transmembrane segment at 200–220 threads the bilayer; that stretch reads LVNGIVTAGSSVFTILLPLLL. Topologically, residues 221–227 are extracellular; that stretch reads GNLTSTV. A helical transmembrane segment spans residues 228 to 248; that stretch reads GLCYTLRILCIFMFVLFLAGF. Residues 249 to 290 lie on the Cytoplasmic side of the membrane; sequence TYRPLVPSSKEKESEDSRSSFFSRRKLSPPKKIFNFALFKET. S262 carries the phosphoserine modification. The helical transmembrane segment at 291-311 threads the bilayer; sequence AYAVWAAGIPLALFGYFVPYV. Over 312-328 the chain is Extracellular; it reads HLMNHVKERFKDVNNKE. The chain crosses the membrane as a helical span at residues 329-349; sequence VLFMCIGVTSGVGRLLFGRIA. A topological domain (cytoplasmic) is located at residue D350. Residues 351–371 form a helical membrane-spanning segment; the sequence is YLPGVKKVYLQVLSFFFIGLT. Over 372 to 395 the chain is Extracellular; sequence SMMIPLCSVFGALIALCLIMGLFD. Residues 396 to 416 form a helical membrane-spanning segment; it reads GCFISIMAPIAFELVGPQDAS. Residues 417 to 418 lie on the Cytoplasmic side of the membrane; the sequence is QA. A helical membrane pass occupies residues 419–439; it reads IGFLLGFMSIPMTVGPPVAGL. Residues 440-450 lie on the Extracellular side of the membrane; it reads LHDKLGSYDLA. Residues 451–471 form a helical membrane-spanning segment; it reads FYLAGIPPFIGGAVLCLIPWI. At 472-514 the chain is on the cytoplasmic side; it reads HSKKQREISKNTGGEKMEKMLANQSSLLSSSSGIFKKESDSII. Phosphoserine is present on residues S497, S500, S502, and S503.

Belongs to the major facilitator superfamily. Monocarboxylate porter (TC 2.A.1.13) family. Not N-glycosylated. In terms of tissue distribution, strongly expressed in intestine, placenta and liver. In small intestine is detected in the basolateral membrane (at protein level).

It is found in the cell membrane. The protein localises to the basolateral cell membrane. The enzyme catalyses L-tryptophan(in) = L-tryptophan(out). The catalysed reaction is L-tyrosine(in) = L-tyrosine(out). It carries out the reaction L-phenylalanine(in) = L-phenylalanine(out). It catalyses the reaction 3,3',5-triiodo-L-thyronine(out) = 3,3',5-triiodo-L-thyronine(in). The enzyme catalyses L-thyroxine(out) = L-thyroxine(in). In terms of biological role, sodium- and proton-independent thyroid hormones and aromatic acids transporter. Mediates both uptake and efflux of 3,5,3'-triiodothyronine (T3) and 3,5,3',5'-tetraiodothyronine (T4) with high affinity, suggesting a role in the homeostasis of thyroid hormone levels. Responsible for low affinity bidirectional transport of the aromatic amino acids, such as phenylalanine, tyrosine, tryptophan and L-3,4-dihydroxyphenylalanine (L-dopa). Plays an important role in homeostasis of aromatic amino acids. This is Monocarboxylate transporter 10 (Slc16a10) from Rattus norvegicus (Rat).